The sequence spans 149 residues: Ribosome-binding factor A (149 aa).

The tract at residues 125–149 is disordered; the sequence is FGSADEVLNEDEGATDDTDDTKGKD. Residues 131-143 show a composition bias toward acidic residues; the sequence is VLNEDEGATDDTD.

The protein belongs to the RbfA family. In terms of assembly, monomer. Binds 30S ribosomal subunits, but not 50S ribosomal subunits or 70S ribosomes.

Its subcellular location is the cytoplasm. Its function is as follows. One of several proteins that assist in the late maturation steps of the functional core of the 30S ribosomal subunit. Associates with free 30S ribosomal subunits (but not with 30S subunits that are part of 70S ribosomes or polysomes). Required for efficient processing of 16S rRNA. May interact with the 5'-terminal helix region of 16S rRNA. This chain is Ribosome-binding factor A, found in Shewanella sp. (strain W3-18-1).